Consider the following 537-residue polypeptide: Immunoglobulin-like domain-containing receptor 1 (537 aa).

Residues 1 to 22 form the signal peptide; the sequence is MGCGLLAAGLLLFTWLPAGCLS. Residues 23–161 form the Ig-like V-type domain; the sequence is LLVTVQHTER…TSGDPDKEVK (139 aa). The Extracellular segment spans residues 23 to 166; that stretch reads LLVTVQHTER…DKEVKLIVLH (144 aa). The cysteines at positions 44 and 144 are disulfide-linked. A helical transmembrane segment spans residues 167–187; it reads WLTVIFIILGALLLLLLIGVC. The Cytoplasmic portion of the chain corresponds to 188-537; the sequence is WCQCCPQYCC…SSHSGRSVVI (350 aa). The tract at residues 333-537 is disordered; the sequence is PPLIRDPPSS…SSHSGRSVVI (205 aa). The span at 341–357 shows a compositional bias: polar residues; it reads SSRTSNPSHQQRLNAVS. Basic and acidic residues-rich tracts occupy residues 359-380 and 434-444; these read RHCD…RELQ and RRPEPREGAQR. The segment covering 480–490 has biased composition (basic residues); the sequence is QRRHHHRRRRS. Residues Ser-490 and Ser-492 each carry the phosphoserine modification. Over residues 518–530 the composition is skewed to basic and acidic residues; the sequence is GNVERRLERESSH.

The protein belongs to the immunoglobulin superfamily. LISCH7 family. In terms of assembly, homooligomer. Interacts with MARVELD2 and OCLN; the interaction is required to recruit MARVELD2 to tricellular contacts. Interacts (via C-terminus) with TRA2A, TRA2B and SRSF1. Interacts with PLSCR1. In terms of tissue distribution, expressed in the vestibule and in hair cells and supporting cells of the cochlea. Expressed in epithelial tissues. Highly expressed in colon but also detected in small intestine, bladder and lung. In colon, expressed in the upper portion of the crypts (at protein level). Expressed in CCK secretory cells of the proximal small intestine (at protein level). Expressed in the organ of Corti, stria vascularis, utricle and saccule of the inner ear.

The protein localises to the cell membrane. It is found in the cell junction. The protein resides in the tight junction. Its subcellular location is the nucleus. It localises to the cytoplasm. Its function is as follows. Maintains epithelial barrier function by recruiting MARVELD2/tricellulin to tricellular tight junctions (tTJs). Crucial for normal hearing by maintaining the structural and functional integrity of tTJs, which are critical for the survival of auditory neurosensory HCs. Mediates fatty acids and lipoproteins-stimulated CCK/cholecystokinin secretion in the small intestine. In the inner ear, may regulate alternative pre-mRNA splicing via binding to TRA2A, TRA2B and SRSF1. The polypeptide is Immunoglobulin-like domain-containing receptor 1 (Mus musculus (Mouse)).